Here is a 324-residue protein sequence, read N- to C-terminus: Ribose-phosphate pyrophosphokinase (324 aa).

ATP-binding positions include 45-47 and 104-105; these read NGE and RQ. Positions 138 and 178 each coordinate Mg(2+). Residue K201 is part of the active site. D-ribose 5-phosphate is bound by residues R203, D229, and 233 to 237; that span reads DTGGT.

This sequence belongs to the ribose-phosphate pyrophosphokinase family. Class I subfamily. In terms of assembly, homohexamer. Mg(2+) serves as cofactor.

It localises to the cytoplasm. It catalyses the reaction D-ribose 5-phosphate + ATP = 5-phospho-alpha-D-ribose 1-diphosphate + AMP + H(+). Its pathway is metabolic intermediate biosynthesis; 5-phospho-alpha-D-ribose 1-diphosphate biosynthesis; 5-phospho-alpha-D-ribose 1-diphosphate from D-ribose 5-phosphate (route I): step 1/1. In terms of biological role, involved in the biosynthesis of the central metabolite phospho-alpha-D-ribosyl-1-pyrophosphate (PRPP) via the transfer of pyrophosphoryl group from ATP to 1-hydroxyl of ribose-5-phosphate (Rib-5-P). The sequence is that of Ribose-phosphate pyrophosphokinase from Streptomyces coelicolor (strain ATCC BAA-471 / A3(2) / M145).